Consider the following 114-residue polypeptide: Fluoride-specific ion channel FluC 2 (114 aa).

3 helical membrane passes run 30 to 50, 57 to 77, and 88 to 108; these read FPVATFLVNVAGCLILGLLSG, TFALLGTGFCGGLTTYSTFAV, and ALPSVVYVVASVAAGLAAAWL. Na(+) contacts are provided by Gly67 and Thr70.

It belongs to the fluoride channel Fluc/FEX (TC 1.A.43) family.

It is found in the cell membrane. It carries out the reaction fluoride(in) = fluoride(out). Its activity is regulated as follows. Na(+) is not transported, but it plays an essential structural role and its presence is essential for fluoride channel function. In terms of biological role, fluoride-specific ion channel. Important for reducing fluoride concentration in the cell, thus reducing its toxicity. The sequence is that of Fluoride-specific ion channel FluC 2 from Rhodococcus jostii (strain RHA1).